Reading from the N-terminus, the 369-residue chain is Putative transport protein YueF (369 aa).

8 consecutive transmembrane segments (helical) span residues 13–33 (ILFV…FQPF), 34–54 (IVFI…YFIF), 73–93 (LIYL…GPII), 159–179 (AVFG…FILF), 213–233 (DTLA…GTAC), 234–254 (FIGY…VMAI), 271–291 (VIVG…VVVI), and 316–336 (IILL…ILAV).

The protein belongs to the autoinducer-2 exporter (AI-2E) (TC 2.A.86) family.

The protein resides in the cell membrane. This chain is Putative transport protein YueF (yueF), found in Bacillus subtilis (strain 168).